We begin with the raw amino-acid sequence, 312 residues long: Methionyl-tRNA formyltransferase (312 aa).

A (6S)-5,6,7,8-tetrahydrofolate-binding site is contributed by 109 to 112; the sequence is SLLP.

This sequence belongs to the Fmt family.

The enzyme catalyses L-methionyl-tRNA(fMet) + (6R)-10-formyltetrahydrofolate = N-formyl-L-methionyl-tRNA(fMet) + (6S)-5,6,7,8-tetrahydrofolate + H(+). Attaches a formyl group to the free amino group of methionyl-tRNA(fMet). The formyl group appears to play a dual role in the initiator identity of N-formylmethionyl-tRNA by promoting its recognition by IF2 and preventing the misappropriation of this tRNA by the elongation apparatus. The polypeptide is Methionyl-tRNA formyltransferase (Geotalea daltonii (strain DSM 22248 / JCM 15807 / FRC-32) (Geobacter daltonii)).